Here is a 263-residue protein sequence, read N- to C-terminus: Pyruvate formate-lyase-activating enzyme (263 aa).

One can recognise a Radical SAM core domain in the interval 23–260 (VDGPGIRFVV…TETYEEYKKR (238 aa)). [4Fe-4S] cluster-binding residues include Cys37, Cys41, and Cys44. Residues 43–45 (YCH), Gly87, 142–144 (DIK), and His215 contribute to the S-adenosyl-L-methionine site.

The protein belongs to the organic radical-activating enzymes family. [4Fe-4S] cluster is required as a cofactor.

Its subcellular location is the cytoplasm. The catalysed reaction is glycyl-[formate C-acetyltransferase] + reduced [flavodoxin] + S-adenosyl-L-methionine = glycin-2-yl radical-[formate C-acetyltransferase] + semiquinone [flavodoxin] + 5'-deoxyadenosine + L-methionine + H(+). Functionally, activation of pyruvate formate-lyase under anaerobic conditions by generation of an organic free radical, using S-adenosylmethionine and reduced flavodoxin as cosubstrates to produce 5'-deoxy-adenosine. The sequence is that of Pyruvate formate-lyase-activating enzyme (act) from Streptococcus mutans serotype c (strain ATCC 700610 / UA159).